A 435-amino-acid polypeptide reads, in one-letter code: Fibrous sheath-interacting protein 1 (435 aa).

2 disordered regions span residues 1–109 (MPMD…DPKL) and 354–393 (SQSH…ESRL). Residues 18–32 (SSSRSRPGSRSSNGS) show a composition bias toward low complexity. Polar residues predominate over residues 50–63 (KLNSGQEGHTSNSG). Residues 64–87 (VEERRNSNDAKWADDSKTKPAKES) show a composition bias toward basic and acidic residues. Residues serine 87 and serine 88 each carry the phosphoserine modification. Residues 108–154 (KLEETNAVLQNAIRKMHRLDKLLAKKQCREKEVKKQGLEMRVKLWEE) are a coiled coil. 2 stretches are compositionally biased toward basic and acidic residues: residues 355 to 371 (QSHK…ERNT) and 378 to 393 (KILR…ESRL).

Belongs to the FSIP1 family. May interact with AKAP4. In terms of tissue distribution, detected in male germ cells and testis.

The protein is Fibrous sheath-interacting protein 1 (Fsip1) of Mus musculus (Mouse).